We begin with the raw amino-acid sequence, 361 residues long: Phosphoserine aminotransferase (361 aa).

L-glutamate is bound at residue R43. Pyridoxal 5'-phosphate is bound by residues 77–78, W103, T153, D173, and Q196; that span reads AS. K197 carries the N6-(pyridoxal phosphate)lysine modification. 238 to 239 lines the pyridoxal 5'-phosphate pocket; it reads NT.

It belongs to the class-V pyridoxal-phosphate-dependent aminotransferase family. SerC subfamily. In terms of assembly, homodimer. It depends on pyridoxal 5'-phosphate as a cofactor.

Its subcellular location is the cytoplasm. The catalysed reaction is O-phospho-L-serine + 2-oxoglutarate = 3-phosphooxypyruvate + L-glutamate. The enzyme catalyses 4-(phosphooxy)-L-threonine + 2-oxoglutarate = (R)-3-hydroxy-2-oxo-4-phosphooxybutanoate + L-glutamate. It participates in amino-acid biosynthesis; L-serine biosynthesis; L-serine from 3-phospho-D-glycerate: step 2/3. The protein operates within cofactor biosynthesis; pyridoxine 5'-phosphate biosynthesis; pyridoxine 5'-phosphate from D-erythrose 4-phosphate: step 3/5. Its function is as follows. Catalyzes the reversible conversion of 3-phosphohydroxypyruvate to phosphoserine and of 3-hydroxy-2-oxo-4-phosphonooxybutanoate to phosphohydroxythreonine. This chain is Phosphoserine aminotransferase, found in Pseudomonas paraeruginosa (strain DSM 24068 / PA7) (Pseudomonas aeruginosa (strain PA7)).